A 163-amino-acid chain; its full sequence is Superoxide dismutase [Mn] (163 aa).

Residues His2, His50, Asp134, and His138 each contribute to the Mn(2+) site.

This sequence belongs to the iron/manganese superoxide dismutase family. Mn(2+) is required as a cofactor.

It carries out the reaction 2 superoxide + 2 H(+) = H2O2 + O2. Destroys superoxide anion radicals which are normally produced within the cells and which are toxic to biological systems. The protein is Superoxide dismutase [Mn] (sodA) of Mycobacterium kansasii.